The sequence spans 152 residues: Peptide deformylase (152 aa).

The Fe cation site is built by C88 and H130. The active site involves E131. Residue H134 participates in Fe cation binding.

Belongs to the polypeptide deformylase family. It depends on Fe(2+) as a cofactor.

It carries out the reaction N-terminal N-formyl-L-methionyl-[peptide] + H2O = N-terminal L-methionyl-[peptide] + formate. In terms of biological role, removes the formyl group from the N-terminal Met of newly synthesized proteins. Requires at least a dipeptide for an efficient rate of reaction. N-terminal L-methionine is a prerequisite for activity but the enzyme has broad specificity at other positions. In Syntrophomonas wolfei subsp. wolfei (strain DSM 2245B / Goettingen), this protein is Peptide deformylase.